The following is a 162-amino-acid chain: Ribosome maturation factor RimP (162 aa).

The protein belongs to the RimP family.

The protein localises to the cytoplasm. Its function is as follows. Required for maturation of 30S ribosomal subunits. The sequence is that of Ribosome maturation factor RimP from Cupriavidus taiwanensis (strain DSM 17343 / BCRC 17206 / CCUG 44338 / CIP 107171 / LMG 19424 / R1) (Ralstonia taiwanensis (strain LMG 19424)).